A 774-amino-acid polypeptide reads, in one-letter code: Potassium/sodium hyperpolarization-activated cyclic nucleotide-gated channel 3 (774 aa).

The interval 1–48 (MEAEQRPAAGASEGATPGLEAVPPVAPPPATAASGPIPKSGPEPKRRH) is disordered. At 1 to 97 (MEAEQRPAAG…PYSDFRFYWD (97 aa)) the chain is on the cytoplasmic side. The segment at 46-91 (RRHLGTLLQPTVNKFSLRVFGSHKAVEIEQERVKSAGAWIIHPYSD) is involved in subunit assembly. The chain crosses the membrane as a helical span at residues 98–118 (LIMLLLMVGNLIVLPVGITFF). The Extracellular segment spans residues 119 to 124 (KEENSP). The chain crosses the membrane as a helical span at residues 125-145 (PWIVFNVLSDTFFLLDLVLNF). Residues 146–171 (RTGIVVEEGAEILLAPRAIRTRYLRT) lie on the Cytoplasmic side of the membrane. The chain crosses the membrane as a helical span at residues 172–192 (WFLVDLISSIPVDYIFLVVEL). The Extracellular portion of the chain corresponds to 193–201 (EPRLDAEVY). Residues 202–222 (KTARALRIVRFTKILSLLRLL) form a helical; Voltage-sensor membrane-spanning segment. Residues 223-253 (RLSRLIRYIHQWEEIFHMTYDLASAVVRIFN) lie on the Cytoplasmic side of the membrane. Residues 254–274 (LIGMMLLLCHWDGCLQFLVPM) traverse the membrane as a helical segment. At 275 to 297 (LQDFPPDCWVSINHMVNHSWGRQ) the chain is on the extracellular side. A glycan (N-linked (GlcNAc...) asparagine) is linked at N291. An intramembrane region (pore-forming) is located at residues 298–319 (YSHALFKAMSHMLCIGYGQQAP). At 320 to 329 (VGMPDVWLTM) the chain is on the extracellular side. A helical membrane pass occupies residues 330 to 350 (LSMIVGATCYAMFIGHATALI). The Cytoplasmic segment spans residues 351–774 (QSLDSSRRQY…PRGLQLSANM (424 aa)). Positions 354–774 (DSSRRQYQEK…PRGLQLSANM (421 aa)) are interaction with KCTD3. 3',5'-cyclic AMP is bound by residues G492, E493, C495, R502, T503, R543, and R546. S634 carries the post-translational modification Phosphoserine. Positions 682–774 (SLSRAGRSQV…PRGLQLSANM (93 aa)) are disordered. The span at 751-763 (TAQPPRPPVPEPA) shows a compositional bias: pro residues.

The protein belongs to the potassium channel HCN family. As to quaternary structure, homotetramer. The potassium channel is composed of a homo- or heterotetrameric complex of pore-forming subunits. Interacts with HCN11. Interacts with KCTD3; this interaction increases cell surface expression and current density of this channel. Interacts with PEX5L. In terms of tissue distribution, detected in brain.

It is found in the cell membrane. It catalyses the reaction K(+)(in) = K(+)(out). The catalysed reaction is Na(+)(in) = Na(+)(out). With respect to regulation, unlike HCN2 and HCN4, HCN3 is insensitive to cyclic nucleotides, such as cAMP or cGMP. This lack of sensitivity of HCN3, despite harboring a functional cyclic nucleotide-binding domain (CNBD), may be explained by its shorter C-terminal sequence, which may alter the normal autoinhibition of the channel. Inhibited by Cs(1+) and ZD7288. Phosphatidylinositol-4,5-bisphosphate (PIP(2)) shifts HCN3 activation to more depolarized potentials and accelerated activation kinetics. In terms of biological role, hyperpolarization-activated ion channel that are permeable to sodium and potassium ions, with an about 3:1 preference for potassium ions. Contributes to the native pacemaker currents in heart (If) and in neurons (Ih). In particular, plays a pivotal role in maintaining excitability and promoting rhythmic burst firing within hypothalamic nuclei. Exerts a significant influence on the configuration of the cardiac action potential waveform. Does not appear to play a prominent role in the processing of acute, neuropathic, or inflammatory pain. This is Potassium/sodium hyperpolarization-activated cyclic nucleotide-gated channel 3 (HCN3) from Homo sapiens (Human).